Reading from the N-terminus, the 259-residue chain is Phosphatidylglycerol--prolipoprotein diacylglyceryl transferase (259 aa).

Helical transmembrane passes span 16–36, 55–75, 92–112, and 117–137; these read LAISWYSLSYVIGILLGWFYA, FITYAVIGIIVGGRLGFVLLY, EGGMSFHGGALGGIIAAYLFC, and INFLSLTDIIAPVVPIGLFLG. Arg138 is a binding site for a 1,2-diacyl-sn-glycero-3-phospho-(1'-sn-glycerol). The next 3 helical transmembrane spans lie at 172–192, 201–221, and 228–248; these read QLYEAFFEGLVLFSILAYATF, GLNSGIFFTFYGLFRITIEIF, and IGFILDSLTMGQILSVPMLLL.

Belongs to the Lgt family.

Its subcellular location is the cell inner membrane. It carries out the reaction L-cysteinyl-[prolipoprotein] + a 1,2-diacyl-sn-glycero-3-phospho-(1'-sn-glycerol) = an S-1,2-diacyl-sn-glyceryl-L-cysteinyl-[prolipoprotein] + sn-glycerol 1-phosphate + H(+). It participates in protein modification; lipoprotein biosynthesis (diacylglyceryl transfer). Catalyzes the transfer of the diacylglyceryl group from phosphatidylglycerol to the sulfhydryl group of the N-terminal cysteine of a prolipoprotein, the first step in the formation of mature lipoproteins. This Rickettsia rickettsii (strain Iowa) protein is Phosphatidylglycerol--prolipoprotein diacylglyceryl transferase.